A 189-amino-acid polypeptide reads, in one-letter code: Interferon alpha-5 (189 aa).

Positions 1-21 (MALPFVLLMALVVLNCKSICS) are cleaved as a signal peptide. 2 disulfides stabilise this stretch: Cys-24-Cys-122 and Cys-52-Cys-162.

This sequence belongs to the alpha/beta interferon family.

The protein resides in the secreted. Functionally, produced by macrophages, IFN-alpha have antiviral activities. Interferon stimulates the production of two enzymes: a protein kinase and an oligoadenylate synthetase. This chain is Interferon alpha-5 (IFNA5), found in Homo sapiens (Human).